A 367-amino-acid chain; its full sequence is Probable dual-specificity RNA methyltransferase RlmN (367 aa).

The active-site Proton acceptor is the Glu92. The region spanning 98 to 326 is the Radical SAM core domain; sequence QEYGLSVCVT…YDTLKKNGIN (229 aa). The cysteines at positions 105 and 341 are disulfide-linked. Positions 112, 116, and 119 each coordinate [4Fe-4S] cluster. Residues 164-165, Ser196, 219-221, and Asn297 contribute to the S-adenosyl-L-methionine site; these read GE and SLH. Cys341 functions as the S-methylcysteine intermediate in the catalytic mechanism.

It belongs to the radical SAM superfamily. RlmN family. Requires [4Fe-4S] cluster as cofactor.

It localises to the cytoplasm. The catalysed reaction is adenosine(2503) in 23S rRNA + 2 reduced [2Fe-2S]-[ferredoxin] + 2 S-adenosyl-L-methionine = 2-methyladenosine(2503) in 23S rRNA + 5'-deoxyadenosine + L-methionine + 2 oxidized [2Fe-2S]-[ferredoxin] + S-adenosyl-L-homocysteine. It catalyses the reaction adenosine(37) in tRNA + 2 reduced [2Fe-2S]-[ferredoxin] + 2 S-adenosyl-L-methionine = 2-methyladenosine(37) in tRNA + 5'-deoxyadenosine + L-methionine + 2 oxidized [2Fe-2S]-[ferredoxin] + S-adenosyl-L-homocysteine. Its function is as follows. Specifically methylates position 2 of adenine 2503 in 23S rRNA and position 2 of adenine 37 in tRNAs. This Listeria innocua serovar 6a (strain ATCC BAA-680 / CLIP 11262) protein is Probable dual-specificity RNA methyltransferase RlmN.